We begin with the raw amino-acid sequence, 117 residues long: Ig heavy chain V region MOO (117 aa).

The Ig-like domain maps to 1–116; that stretch reads EVKLVESGGD…FGQGTIVTVS (116 aa).

This chain is Ig heavy chain V region MOO, found in Canis lupus familiaris (Dog).